Here is a 140-residue protein sequence, read N- to C-terminus: Endoribonuclease YbeY (140 aa).

Residues histidine 99, histidine 103, and histidine 109 each contribute to the Zn(2+) site.

It belongs to the endoribonuclease YbeY family. The cofactor is Zn(2+).

The protein localises to the cytoplasm. In terms of biological role, single strand-specific metallo-endoribonuclease involved in late-stage 70S ribosome quality control and in maturation of the 3' terminus of the 16S rRNA. The protein is Endoribonuclease YbeY of Wolinella succinogenes (strain ATCC 29543 / DSM 1740 / CCUG 13145 / JCM 31913 / LMG 7466 / NCTC 11488 / FDC 602W) (Vibrio succinogenes).